A 387-amino-acid polypeptide reads, in one-letter code: Exodeoxyribonuclease 7 large subunit (387 aa).

It belongs to the XseA family. In terms of assembly, heterooligomer composed of large and small subunits.

The protein localises to the cytoplasm. The catalysed reaction is Exonucleolytic cleavage in either 5'- to 3'- or 3'- to 5'-direction to yield nucleoside 5'-phosphates.. Its function is as follows. Bidirectionally degrades single-stranded DNA into large acid-insoluble oligonucleotides, which are then degraded further into small acid-soluble oligonucleotides. The protein is Exodeoxyribonuclease 7 large subunit of Parasynechococcus marenigrum (strain WH8102).